Consider the following 1064-residue polypeptide: Importin-13 homolog A (1064 aa).

Residues 40-109 (ALPQIQQWLI…LDNLLLFLKT (70 aa)) form the Importin N-terminal domain. Disordered stretches follow at residues 695-722 (TTQQ…NNNN) and 839-860 (NNKK…NENN). Positions 700 to 722 (NNNNNNNNNNNNNNNNNNNNNNN) are enriched in low complexity.

The protein belongs to the importin beta family. Forms a complex with an importin alpha subunit.

It localises to the cytoplasm. The protein localises to the nucleus envelope. Functionally, required for nuclear protein import and mediates docking of import substrate to distinct nucleoporins. The polypeptide is Importin-13 homolog A (ipo13A) (Dictyostelium discoideum (Social amoeba)).